Consider the following 473-residue polypeptide: Laccase-3 (473 aa).

Residues 1-21 (MSFSSLRRALVFLGACSSALA) form the signal peptide. 2 consecutive Plastocyanin-like domains span residues 23 to 148 (IGPV…LVIY) and 160 to 298 (VDDE…ILRY). N75 carries an N-linked (GlcNAc...) asparagine glycan. Cu cation is bound by residues H85, H87, H130, and H132. Disulfide bonds link C106–C462 and C138–C221. N-linked (GlcNAc...) asparagine glycans are attached at residues N226, N283, N309, N346, N350, and N374. The region spanning 365 to 444 (TVPVLLQILN…AGLAIVFAED (80 aa)) is the Plastocyanin-like 3 domain. Positions 410, 413, 415, 426, 427, 428, and 432 each coordinate Cu cation. N-linked (GlcNAc...) asparagine glycosylation is present at N470.

Belongs to the multicopper oxidase family. As to quaternary structure, homodimer. It depends on Cu cation as a cofactor.

It localises to the secreted. The catalysed reaction is 4 hydroquinone + O2 = 4 benzosemiquinone + 2 H2O. Functionally, lignin degradation and detoxification of lignin-derived products. In Trametes villosa (White-rot fungus), this protein is Laccase-3 (LCC3).